The chain runs to 259 residues: Phosphate import ATP-binding protein PstB (259 aa).

The ABC transporter domain maps to 13-254 (LEVNNLNFHY…PRLQRTEDYI (242 aa)). Residue 45–52 (GPSGCGKS) participates in ATP binding.

This sequence belongs to the ABC transporter superfamily. Phosphate importer (TC 3.A.1.7) family. In terms of assembly, the complex is composed of two ATP-binding proteins (PstB), two transmembrane proteins (PstC and PstA) and a solute-binding protein (PstS).

Its subcellular location is the cell inner membrane. The enzyme catalyses phosphate(out) + ATP + H2O = ADP + 2 phosphate(in) + H(+). In terms of biological role, part of the ABC transporter complex PstSACB involved in phosphate import. Responsible for energy coupling to the transport system. This chain is Phosphate import ATP-binding protein PstB, found in Pasteurella multocida (strain Pm70).